A 187-amino-acid polypeptide reads, in one-letter code: Bis(5'-nucleosyl)-tetraphosphatase, symmetrical (187 aa).

Residues 18 to 132 (RYQHTIGVME…IFLADYIEPN (115 aa)) form the HD domain. His21 lines the ADP pocket. The Fe cation site is built by His21, His50, and Asp51. ADP is bound by residues 51–54 (DYAK), His83, 109–110 (HT), Asp127, Arg133, and 170–175 (PIYPDT). Asp127 provides a ligand contact to Fe cation.

Belongs to the Ap4A hydrolase YqeK family. In terms of assembly, homodimer.

It catalyses the reaction P(1),P(4)-bis(5'-adenosyl) tetraphosphate + H2O = 2 ADP + 2 H(+). Its function is as follows. Hydrolyzes diadenosine 5',5'''-P1,P4-tetraphosphate (Ap4A) to yield ADP. This is Bis(5'-nucleosyl)-tetraphosphatase, symmetrical from Halalkalibacterium halodurans (strain ATCC BAA-125 / DSM 18197 / FERM 7344 / JCM 9153 / C-125) (Bacillus halodurans).